A 1153-amino-acid polypeptide reads, in one-letter code: ATP-dependent helicase/deoxyribonuclease subunit B (1153 aa).

The UvrD-like helicase ATP-binding domain occupies 1–289 (MELNAYIGRA…KHLEQNFNAL (289 aa)). 8–15 (GRAGTGKS) lines the ATP pocket. The 315-residue stretch at 269 to 583 (LDVQRFIHND…SIGTMDLAKV (315 aa)) folds into the UvrD-like helicase C-terminal domain. [4Fe-4S] cluster contacts are provided by cysteine 784, cysteine 1110, cysteine 1113, and cysteine 1119.

The protein belongs to the helicase family. AddB/RexB type 1 subfamily. As to quaternary structure, heterodimer of AddA and AddB. The cofactor is Mg(2+). It depends on [4Fe-4S] cluster as a cofactor.

The heterodimer acts as both an ATP-dependent DNA helicase and an ATP-dependent, dual-direction single-stranded exonuclease. Recognizes the chi site generating a DNA molecule suitable for the initiation of homologous recombination. The AddB subunit has 5' -&gt; 3' nuclease activity but not helicase activity. The chain is ATP-dependent helicase/deoxyribonuclease subunit B from Staphylococcus saprophyticus subsp. saprophyticus (strain ATCC 15305 / DSM 20229 / NCIMB 8711 / NCTC 7292 / S-41).